We begin with the raw amino-acid sequence, 282 residues long: Para-Rep C2 (282 aa).

The region spanning 1-99 (MASKRWCFTL…ETLIAEIGAP (99 aa)) is the CRESS-DNA virus Rep endonuclease domain. Positions 7–10 (CFTL) match the RCR-1 motif. A divalent metal cation contacts are provided by glutamate 38 and histidine 47. The RCR-2 motif lies at 47–49 (HLQ). Positions 56–77 (KLIRLGGLKKKFGSIAHWEIAK) match the Nuclear localization signal motif. Tyrosine 86 functions as the For DNA cleavage activity in the catalytic mechanism. Residues 86 to 89 (YCTK) carry the RCR-3 motif. A Nuclear localization signal motif is present at residues 99–105 (PVKKGSN). 174–182 (GPDGGEGKS) serves as a coordination point for ATP.

This sequence belongs to the nanoviridea/circoviridae replication-associated protein family. Homooligomer (Potential). Rep binds to repeated DNA motifs (iterons). Requires Mg(2+) as cofactor. Mn(2+) serves as cofactor.

The protein resides in the host nucleus. The enzyme catalyses ATP + H2O = ADP + phosphate + H(+). Functionally, initiates and terminates the replication only of its own subviral DNA molecule. The closed circular ssDNA genome is first converted to a superhelical dsDNA. Rep binds a specific hairpin at the genome origin of replication. Introduces an endonucleolytic nick within the intergenic region of the genome, thereby initiating the rolling circle replication (RCR). Following cleavage, binds covalently to the 5'-phosphate of DNA as a tyrosyl ester. The cleavage gives rise to a free 3'-OH that serves as a primer for the cellular DNA polymerase. The polymerase synthesizes the (+) strand DNA by rolling circle mechanism. After one round of replication, a Rep-catalyzed nucleotidyl transfer reaction releases a circular single-stranded virus genome, thereby terminating the replication. Displays origin-specific DNA cleavage, nucleotidyl transferase, ATPase and helicase activities. This is Para-Rep C2 (C2) from Milk vetch dwarf C2 alphasatellite (MVDC2A).